The chain runs to 36 residues: Kappa-theraphotoxin-Aa1a (36 aa).

3 disulfide bridges follow: Cys3–Cys18, Cys10–Cys23, and Cys17–Cys30. Position 36 is an isoleucine amide (Ile36).

Belongs to the neurotoxin 10 (Hwtx-1) family. In terms of tissue distribution, expressed by the venom gland.

Its subcellular location is the secreted. Its function is as follows. Selective inhibitor of voltage-gated potassium channel Kv10.1/KCNH1/EAG1 (IC(50)=637 nM). It acts by shifting the voltage dependence of channel activation in a depolarising direction. It shows a 100% inhibition at saturating concentrations, shows fast on-rates and is reversible. It also slightly affects channel inactivation, when the membrane is highly depolarised (&gt;+80 mV). The sequence is that of Kappa-theraphotoxin-Aa1a from Avicularia aurantiaca (Yellow-banded pinktoe tarantula).